Reading from the N-terminus, the 687-residue chain is T-box transcription factor TBX2b (687 aa).

Residues 103-276 constitute a DNA-binding region (T-box); the sequence is LWDQFHKLGT…NNPFAKGFRD (174 aa). Disordered stretches follow at residues 303–452 and 611–687; these read DRDG…ESPS and NLLT…DSPK. Basic and acidic residues-rich tracts occupy residues 338-357, 375-400, and 408-430; these read GSRD…HQND, SRSE…RKTS, and NLEK…KDTE. Composition is skewed to polar residues over residues 431–451, 611–630, and 644–654; these read NSGI…TESP, NLLT…SSKC, and GASQRNGSPKT. A coiled-coil region spans residues 654-681; it reads TTMKESINELQNIQRLVSGLESQRETSS. Positions 675 to 687 are enriched in basic and acidic residues; sequence SQRETSSPRDSPK.

As to quaternary structure, binds DNA as a monomer. In terms of tissue distribution, expressed in the axial mesoderm, notably, in the notochordal precursor cells immediately before formation of the notochord and in the chordoneural hinge of the tail bud, after the notochord is formed. In addition, its expression is detected in the ventral forebrain, sensory neurons, fin buds and excretory system.

It is found in the nucleus. In terms of biological role, transcription factor which acts as a transcriptional repressor. May also function as a transcriptional activator. Binds to the palindromic T site 5'-TTCACACCTAGGTGTGAA-3' DNA sequence, or a half-site, which are present in the regulatory region of several genes. Involved in the transcriptional regulation of genes required for mesoderm differentiation. Plays a role in the specification of late notochordal precursor cells and formation of the differentiated notochord. Required for cardiac atrioventricular canal formation. The polypeptide is T-box transcription factor TBX2b (tbx2b) (Danio rerio (Zebrafish)).